Here is a 744-residue protein sequence, read N- to C-terminus: Tripartite motif-containing protein 3 (744 aa).

Alanine 2 carries the post-translational modification N-acetylalanine. The interval 2–290 (AKREDSPGPE…LAAQAFPERP (289 aa)) is interaction with KIF21B. Serine 7 is modified (phosphoserine). The segment at 22–63 (CSICLDRYRCPKVLPCLHTFCERCLQNYIPPQSLTLSCPVCR) adopts an RING-type zinc-finger fold. The segment at 110–151 (GRPLSCPNHEGKTMEFYCEACETAMCGECRAGEHREHGTVLL) adopts a B box-type zinc-finger fold. Residues cysteine 115, histidine 118, cysteine 138, and histidine 143 each coordinate Zn(2+). Positions 153–224 (DVVEQHKAAL…RKQALVSDLE (72 aa)) form a coiled coil. One copy of the Filamin repeat lies at 317-418 (TTSATAHETV…VRGSPFRVRA (102 aa)). Residues 419-464 (LRPGDLPPSPDDVKRRVKSPGGPGSHVRQKAVRRPSSMYSTGGKRK) are disordered. Serine 427 carries the phosphoserine modification. NHL repeat units follow at residues 473–516 (VFRV…FSNE), 520–563 (KFRF…FSPE), 564–605 (GKFK…FQPN), 609–652 (VGRF…YSAD), 656–699 (LFKF…FDSS), and 700–743 (GSFL…YRYL).

This sequence belongs to the TRIM/RBCC family. As to quaternary structure, forms homooligomers. Interacts with TRIM2; this interaction reduces TRIM2 activity. Associates with myosin-Vb (MYO5B) and alpha-actinin-4 (ACTN4). Component of the CART complex, at least composed of ACTN4, HGS/HRS, MYO5B and TRIM3. Interacts with ZFYVE28/LST2. Interacts with KIF21B.

It is found in the cytoplasm. It localises to the early endosome. Its subcellular location is the golgi apparatus. The protein localises to the trans-Golgi network. The protein resides in the cell projection. It is found in the dendrite. It catalyses the reaction S-ubiquitinyl-[E2 ubiquitin-conjugating enzyme]-L-cysteine + [acceptor protein]-L-lysine = [E2 ubiquitin-conjugating enzyme]-L-cysteine + N(6)-ubiquitinyl-[acceptor protein]-L-lysine.. In terms of biological role, E3 ubiquitin ligase that plays essential roles in neuronal functions such as regulation of neuronal plasticity, learning, and memory. In addition to its neuronal functions, participates in other biological processes such as innate immunity or cell cycle regulation. Component of the cytoskeleton-associated recycling or transport complex in neurons, polyubiquitinates gamma-actin, thus regulating neuronal plasticity, learning, and memory. Ubiquitinates postsynaptic scaffold GKAP, a neuronal substrate involved in synaptic remodeling and thereby modulates dendritic spine morphology. Positively regulates motility of microtubule-dependent motor protein KIF21B. Induces growth arrest via its RING-dependent E3 ligase activity and ubiquinates CDKN1A. Positively regulates TLR3-mediated signaling by mediating 'Lys-63'-linked polyubiquitination of TLR3. In turn, promotes the recognition and sorting of polyubiquitinated TLR3 by the ESCRT complexes. This Mus musculus (Mouse) protein is Tripartite motif-containing protein 3 (Trim3).